We begin with the raw amino-acid sequence, 354 residues long: Ferrochelatase (354 aa).

Fe cation-binding residues include histidine 214 and glutamate 295.

Belongs to the ferrochelatase family.

It is found in the cytoplasm. It carries out the reaction heme b + 2 H(+) = protoporphyrin IX + Fe(2+). It participates in porphyrin-containing compound metabolism; protoheme biosynthesis; protoheme from protoporphyrin-IX: step 1/1. In terms of biological role, catalyzes the ferrous insertion into protoporphyrin IX. This Burkholderia ambifaria (strain ATCC BAA-244 / DSM 16087 / CCUG 44356 / LMG 19182 / AMMD) (Burkholderia cepacia (strain AMMD)) protein is Ferrochelatase.